An 83-amino-acid chain; its full sequence is Exodeoxyribonuclease 7 small subunit (83 aa).

Belongs to the XseB family. As to quaternary structure, heterooligomer composed of large and small subunits.

The protein localises to the cytoplasm. The enzyme catalyses Exonucleolytic cleavage in either 5'- to 3'- or 3'- to 5'-direction to yield nucleoside 5'-phosphates.. Its function is as follows. Bidirectionally degrades single-stranded DNA into large acid-insoluble oligonucleotides, which are then degraded further into small acid-soluble oligonucleotides. The chain is Exodeoxyribonuclease 7 small subunit from Heliobacterium modesticaldum (strain ATCC 51547 / Ice1).